The chain runs to 254 residues: Homeobox protein Dlx4b (254 aa).

Residues 129–188 (IRKPRTIYSSVQLQALHQRFQQTQYLALPERADLAAKLGLTQTQVKIWFQNKRSKYKKIM) constitute a DNA-binding region (homeobox).

Belongs to the distal-less homeobox family.

The protein localises to the nucleus. During larvae development, may be important for neurocranium morphogenesis. This chain is Homeobox protein Dlx4b (dlx4b), found in Danio rerio (Zebrafish).